Here is a 357-residue protein sequence, read N- to C-terminus: A-type ATP synthase subunit C (357 aa).

The protein belongs to the V-ATPase V0D/AC39 subunit family. Has multiple subunits with at least A(3), B(3), C, D, E, F, H, I and proteolipid K(x).

It localises to the cell membrane. In terms of biological role, component of the A-type ATP synthase that produces ATP from ADP in the presence of a proton gradient across the membrane. In Methanococcoides burtonii (strain DSM 6242 / NBRC 107633 / OCM 468 / ACE-M), this protein is A-type ATP synthase subunit C.